We begin with the raw amino-acid sequence, 181 residues long: MSEQNSNPLQDAAPEEIEAAMAANAADELQRLQTELAELKAKSAELADQFLRAKAEAENVRRRAEDEVSKARKFGIESFAESLLPVCDSLDAALAIQQATPEQLREGADATLRQLTSALERNKVVTINPAAGEKFDPNLHQAISMVPAQQEANTVVSVLQKGYLIADRILRPALVTVAQPQ.

It belongs to the GrpE family. In terms of assembly, homodimer.

It localises to the cytoplasm. Functionally, participates actively in the response to hyperosmotic and heat shock by preventing the aggregation of stress-denatured proteins, in association with DnaK and GrpE. It is the nucleotide exchange factor for DnaK and may function as a thermosensor. Unfolded proteins bind initially to DnaJ; upon interaction with the DnaJ-bound protein, DnaK hydrolyzes its bound ATP, resulting in the formation of a stable complex. GrpE releases ADP from DnaK; ATP binding to DnaK triggers the release of the substrate protein, thus completing the reaction cycle. Several rounds of ATP-dependent interactions between DnaJ, DnaK and GrpE are required for fully efficient folding. The chain is Protein GrpE from Delftia acidovorans (strain DSM 14801 / SPH-1).